A 212-amino-acid polypeptide reads, in one-letter code: Thymidylate kinase (212 aa).

Residue 7–14 (GIEGSGKS) participates in ATP binding.

Belongs to the thymidylate kinase family.

The catalysed reaction is dTMP + ATP = dTDP + ADP. Its function is as follows. Phosphorylation of dTMP to form dTDP in both de novo and salvage pathways of dTTP synthesis. The polypeptide is Thymidylate kinase (Oleidesulfovibrio alaskensis (strain ATCC BAA-1058 / DSM 17464 / G20) (Desulfovibrio alaskensis)).